A 143-amino-acid polypeptide reads, in one-letter code: ATP synthase subunit b' (143 aa).

A helical transmembrane segment spans residues 6–26; sequence ATLPVMALQFILLAVILNAVF.

The protein belongs to the ATPase B chain family. As to quaternary structure, F-type ATPases have 2 components, F(1) - the catalytic core - and F(0) - the membrane proton channel. F(1) has five subunits: alpha(3), beta(3), gamma(1), delta(1), epsilon(1). F(0) has four main subunits: a(1), b(1), b'(1) and c(10-14). The alpha and beta chains form an alternating ring which encloses part of the gamma chain. F(1) is attached to F(0) by a central stalk formed by the gamma and epsilon chains, while a peripheral stalk is formed by the delta, b and b' chains.

The protein localises to the cellular thylakoid membrane. Functionally, f(1)F(0) ATP synthase produces ATP from ADP in the presence of a proton or sodium gradient. F-type ATPases consist of two structural domains, F(1) containing the extramembraneous catalytic core and F(0) containing the membrane proton channel, linked together by a central stalk and a peripheral stalk. During catalysis, ATP synthesis in the catalytic domain of F(1) is coupled via a rotary mechanism of the central stalk subunits to proton translocation. Component of the F(0) channel, it forms part of the peripheral stalk, linking F(1) to F(0). The b'-subunit is a diverged and duplicated form of b found in plants and photosynthetic bacteria. The polypeptide is ATP synthase subunit b' (Microcystis aeruginosa (strain NIES-843 / IAM M-2473)).